We begin with the raw amino-acid sequence, 225 residues long: Transmembrane emp24 domain-containing protein p24delta11 (225 aa).

The N-terminal stretch at 1–35 (MDLLPSRYKIHKTKLRWILTMMTMMMMMVMRRGES) is a signal peptide. The Lumenal segment spans residues 36–193 (MRLDMESGNT…ELNRSTNSRM (158 aa)). One can recognise a GOLD domain in the interval 45-160 (TKCISDDIKT…ITMLEVEVRK (116 aa)). Positions 175 to 188 (LIEREREMQELNRS) form a coiled coil. Arg178 bears the Omega-N-methylated arginine mark. N-linked (GlcNAc...) asparagine glycosylation is present at Asn186. A helical membrane pass occupies residues 194–210 (AALSLLSFVVTMSVAGL). The Cytoplasmic segment spans residues 211 to 225 (QLRHLKSFLERKKLL). Residues 218–219 (FL) carry the COPII vesicle coat-binding motif. The COPI vesicle coat-binding signature appears at 218-225 (FLERKKLL).

The protein belongs to the EMP24/GP25L family. As to quaternary structure, probably oligomerizes with other members of the EMP24/GP25L family. Associates with the COPI vesicle coat (coatomer). Associates with the COPII vesicle coat (coatomer).

The protein localises to the endoplasmic reticulum membrane. It localises to the golgi apparatus. Its subcellular location is the cis-Golgi network membrane. It is found in the golgi stack membrane. In terms of biological role, involved in vesicular protein trafficking. Mainly functions in the early secretory pathway. Thought to act as cargo receptor at the lumenal side for incorporation of secretory cargo molecules into transport vesicles and to be involved in vesicle coat formation at the cytoplasmic side. The protein is Transmembrane emp24 domain-containing protein p24delta11 of Arabidopsis thaliana (Mouse-ear cress).